The sequence spans 104 residues: Endogenous retrovirus group K member 21 Rec protein (104 aa).

Residues 1 to 48 are disordered; it reads MHPSEMQRKAPPRRRRHRNRAPLTHKMNKMVTSEQMKLPSTKKAEPPT. Residues 10 to 20 are compositionally biased toward basic residues; that stretch reads APPRRRRHRNR. A Nuclear localization signal motif is present at residues 13–20; it reads RRRRHRNR. A Nuclear export signal motif is present at residues 49-58; that stretch reads WAQLKKLTQL.

As to quaternary structure, forms homodimers, homotrimers, and homotetramers via a C-terminal domain. Associates with XPO1 and with ZNF145.

It localises to the cytoplasm. It is found in the nucleus. Its subcellular location is the nucleolus. In terms of biological role, retroviral replication requires the nuclear export and translation of unspliced, singly-spliced and multiply-spliced derivatives of the initial genomic transcript. Rec interacts with a highly structured RNA element (RcRE) present in the viral 3'LTR and recruits the cellular nuclear export machinery. This permits export to the cytoplasm of unspliced genomic or incompletely spliced subgenomic viral transcripts. This chain is Endogenous retrovirus group K member 21 Rec protein (ERVK-21), found in Homo sapiens (Human).